The sequence spans 25 residues: C-reactive protein P2 subunit 4 (25 aa).

Residues 1–25 form the Pentraxin (PTX) domain; that stretch reads GRSLVFPEETANSFVELFPAKELSL.

Belongs to the pentraxin family. As to quaternary structure, heteropentamer. Discoid arrangement of 5 non-covalently bound subunits 1, 2, 3 and 4. The cofactor is Ca(2+). In terms of processing, glycosylated.

The protein localises to the secreted. Functionally, displays several functions associated with host defense: it promotes agglutination, bacterial capsular swelling, phagocytosis, and complement fixation through its calcium-dependent binding to phosphorylcholine. This chain is C-reactive protein P2 subunit 4, found in Gadus morhua (Atlantic cod).